The primary structure comprises 127 residues: Large ribosomal subunit protein bL12 (127 aa).

A disordered region spans residues 98-127 (PKPIKEGAPKAEAESLKSKLEEAGAEVELK).

Belongs to the bacterial ribosomal protein bL12 family. In terms of assembly, homodimer. Part of the ribosomal stalk of the 50S ribosomal subunit. Forms a multimeric L10(L12)X complex, where L10 forms an elongated spine to which 2 to 4 L12 dimers bind in a sequential fashion. Binds GTP-bound translation factors.

Forms part of the ribosomal stalk which helps the ribosome interact with GTP-bound translation factors. Is thus essential for accurate translation. The protein is Large ribosomal subunit protein bL12 of Amoebophilus asiaticus (strain 5a2).